The primary structure comprises 160 residues: Endoribonuclease YbeY (160 aa).

Zn(2+) is bound by residues histidine 124, histidine 128, and histidine 134.

The protein belongs to the endoribonuclease YbeY family. Zn(2+) serves as cofactor.

The protein localises to the cytoplasm. Single strand-specific metallo-endoribonuclease involved in late-stage 70S ribosome quality control and in maturation of the 3' terminus of the 16S rRNA. This chain is Endoribonuclease YbeY, found in Jannaschia sp. (strain CCS1).